A 461-amino-acid chain; its full sequence is uncharacterized protein (461 aa).

Residues 86–127 (KMKPNKDDDEEEDEDDEDDEDDEEEDNEEEDNEEENEITIAP) form a disordered region. Positions 92-122 (DDDEEEDEDDEDDEDDEEEDNEEEDNEEENE) are enriched in acidic residues. Coiled-coil stretches lie at residues 95 to 123 (EEED…ENEI) and 405 to 459 (NKYI…KLKK).

The protein belongs to the mimivirus L5 family.

This is an uncharacterized protein from Acanthamoeba polyphaga mimivirus (APMV).